A 1120-amino-acid polypeptide reads, in one-letter code: ISWI chromatin-remodeling complex ATPase ISW2 (1120 aa).

Basic and acidic residues predominate over residues 1 to 16 (MTTQQEEQRSDTKNSK). Disordered stretches follow at residues 1-58 (MTTQ…VEDR) and 129-153 (LSKS…EDAE). Phosphoserine is present on residues Ser-17 and Ser-19. The segment covering 47–58 (LSDKEIYTVEDR) has biased composition (basic and acidic residues). The Helicase ATP-binding domain maps to 196-361 (ISLHENKLSG…WALLNFLLPD (166 aa)). 209–216 (DEMGLGKT) is a binding site for ATP. Positions 312–315 (DEAH) match the DEAH box motif. The region spanning 494–645 (ILDKLLKRLK…QLVIQQGTGK (152 aa)) is the Helicase C-terminal domain. 2 disordered regions span residues 764 to 783 (GGGS…PRAP) and 828 to 853 (NEGS…KGHE). The residue at position 831 (Ser-831) is a Phosphoserine. One can recognise an SANT domain in the interval 886–938 (KAFTNWNKRDFMAFINACAKYGRDDMENIKKSIDSKTPEEVEVYAKIFWERLK). The disordered stretch occupies residues 1062–1120 (PDANKKKRSRTSATREDTPLSQNESTRASTVPNLPTTMVTNQKDTNDHVDKRTKIDQEA). Position 1079 is a phosphothreonine (Thr-1079). The segment covering 1080–1104 (PLSQNESTRASTVPNLPTTMVTNQK) has biased composition (polar residues). Ser-1082 carries the phosphoserine modification. Residues 1105–1120 (DTNDHVDKRTKIDQEA) are compositionally biased toward basic and acidic residues.

Belongs to the SNF2/RAD54 helicase family. ISWI subfamily. As to quaternary structure, component of the ISW2 complex, which at least consists of ISW2, ITC1, DLS1 and DPB4. May form a stable subcomplex with ITC1.

Its subcellular location is the nucleus. Catalytic component of the ISW2 complex, which acts in remodeling the chromatin by catalyzing an ATP-dependent alteration in the structure of nucleosomal DNA. The ISW2 complex is involved in coordinating transcriptional repression and in inheritance of telomeric silencing. It is involved in repression of MAT a-specific genes, INO1, and early meiotic genes during mitotic growth dependent upon transcription factor UME6 and in a parallel pathway to the RPD3-SIN3 histone deacetylase complex. The chain is ISWI chromatin-remodeling complex ATPase ISW2 (ISW2) from Saccharomyces cerevisiae (strain ATCC 204508 / S288c) (Baker's yeast).